Here is a 530-residue protein sequence, read N- to C-terminus: Chaperone Ric-8A (530 aa).

The residue at position 435 (Ser-435) is a Phosphoserine; by CK2. Thr-440 bears the Phosphothreonine; by CK2 mark. Thr-442 is subject to Phosphothreonine. A phosphoserine mark is found at Ser-501, Ser-522, Ser-523, and Ser-527.

This sequence belongs to the synembryn family. As to quaternary structure, interacts with GDP-bound G alpha proteins GNAI1, GNAO1 and GNAQ, and with GNA13 with lower affinity. Does not interact with G-alpha proteins when they are in complex with subunits beta and gamma. Interacts (via C-terminus) with RGS14; the interaction stimulates the dissociation of the complex between RGS14 and the active GTP-bound form of GNAI1. Interacts with NCS1; interaction is favored in the absence of Ca(2+) and myristoylation of NCS1 is not required. In terms of processing, phosphorylated at Ser-435 and Thr-440 by CK2, stabilizing its interface with G alpha proteins.

It is found in the cytoplasm. The protein localises to the cell cortex. Chaperone that specifically binds and folds nascent G alpha proteins prior to G protein heterotrimer formation, promoting their stability and activity: folds GNAI1, GNAO1, GNA13 and GNAQ. Does not fold G(s) G-alpha proteins GNAS nor GNAL. Also acts as a guanine nucleotide exchange factor (GEF) for G alpha proteins by stimulating exchange of bound GDP for free GTP. Involved in regulation of microtubule pulling forces during mitotic movement of chromosomes by stimulating G(i)-alpha protein (GNAI1), possibly leading to release G(i)-alpha-GTP and NuMA proteins from the NuMA-GPSM2-G(i)-alpha-GDP complex. Also acts as an activator for G(q)-alpha (GNAQ) protein by enhancing the G(q)-coupled receptor-mediated ERK activation. The protein is Chaperone Ric-8A of Rattus norvegicus (Rat).